Consider the following 323-residue polypeptide: Acetyl-coenzyme A carboxylase carboxyl transferase subunit alpha (323 aa).

The region spanning 36–293 (ELELLSAKAQ…KEEVVKNLQI (258 aa)) is the CoA carboxyltransferase C-terminal domain.

It belongs to the AccA family. Acetyl-CoA carboxylase is a heterohexamer composed of biotin carboxyl carrier protein (AccB), biotin carboxylase (AccC) and two subunits each of ACCase subunit alpha (AccA) and ACCase subunit beta (AccD).

Its subcellular location is the cytoplasm. It catalyses the reaction N(6)-carboxybiotinyl-L-lysyl-[protein] + acetyl-CoA = N(6)-biotinyl-L-lysyl-[protein] + malonyl-CoA. The protein operates within lipid metabolism; malonyl-CoA biosynthesis; malonyl-CoA from acetyl-CoA: step 1/1. In terms of biological role, component of the acetyl coenzyme A carboxylase (ACC) complex. First, biotin carboxylase catalyzes the carboxylation of biotin on its carrier protein (BCCP) and then the CO(2) group is transferred by the carboxyltransferase to acetyl-CoA to form malonyl-CoA. This Carboxydothermus hydrogenoformans (strain ATCC BAA-161 / DSM 6008 / Z-2901) protein is Acetyl-coenzyme A carboxylase carboxyl transferase subunit alpha.